Here is a 335-residue protein sequence, read N- to C-terminus: MIRVGINGYGTIGKRVADAVAAQPDMTVAGVAKTSPNFEATQARKRGFDLYTAVEDRADQFPAAGIETAGPVDDLIADSDVVVDATPSGVGAENRSRYAAHDTPAIYQGGEDASVADVSFNARANFEAAADADHVRVVSCNTTGLSRLLAPLREQYGIEKVRATLVRRGGDPGQTDRGPINDILPDPITIPSHHGPDVNTIFPDLDIDTLGMKVPATLMHMHSINVTLERDPDAADVRDVLAGQSRIMLLDDDLGIDGTGPLKEYAQDMGRPRGDLWENCLWGESVTMDGRDFYCFQAIHQESDVVPENVDAVRAIAGDADAAESIATTNDALGI.

NAD(+)-binding positions include threonine 11–isoleucine 12 and glycine 110. Residue serine 139–asparagine 141 coordinates D-glyceraldehyde 3-phosphate. Catalysis depends on cysteine 140, which acts as the Nucleophile. Arginine 168 contacts NAD(+). Histidine 194–glycine 195 is a binding site for D-glyceraldehyde 3-phosphate. Position 301 (glutamine 301) interacts with NAD(+).

It belongs to the glyceraldehyde-3-phosphate dehydrogenase family. In terms of assembly, homotetramer.

The protein resides in the cytoplasm. It catalyses the reaction D-glyceraldehyde 3-phosphate + phosphate + NADP(+) = (2R)-3-phospho-glyceroyl phosphate + NADPH + H(+). It carries out the reaction D-glyceraldehyde 3-phosphate + phosphate + NAD(+) = (2R)-3-phospho-glyceroyl phosphate + NADH + H(+). Its pathway is carbohydrate degradation; glycolysis; pyruvate from D-glyceraldehyde 3-phosphate: step 1/5. This chain is Glyceraldehyde-3-phosphate dehydrogenase, found in Halobacterium salinarum (strain ATCC 29341 / DSM 671 / R1).